We begin with the raw amino-acid sequence, 448 residues long: UPF0210 protein PAE3581 (448 aa).

It belongs to the UPF0210 family.

The protein is UPF0210 protein PAE3581 of Pyrobaculum aerophilum (strain ATCC 51768 / DSM 7523 / JCM 9630 / CIP 104966 / NBRC 100827 / IM2).